The chain runs to 279 residues: MTTRIDTKFAELKAEGRPALVTYFMGGDPDLETALKVMKALPKAGADVIELGMPFSDPMADGPAIQAAGLRALNAGQTLAKTLYMAAEFRKEDDTTPIVMMGYYNLIYIYGVERFLTDAKASGVDGLIVVDLPSEMDAELCIPAMKAGINFIRLTTPTTDDKRLPKVLHNSSGFVYYVSMNGITGAAIADTAKVGEAVRHIKKSTDLPICVGFGVKTPEQAAAIATHADGVVVGTAIVNAIAGELDEKGKAKGDPVAAATRLVHALAESVRATRLEAAQ.

Active-site proton acceptor residues include glutamate 50 and aspartate 61.

Belongs to the TrpA family. As to quaternary structure, tetramer of two alpha and two beta chains.

It carries out the reaction (1S,2R)-1-C-(indol-3-yl)glycerol 3-phosphate + L-serine = D-glyceraldehyde 3-phosphate + L-tryptophan + H2O. It functions in the pathway amino-acid biosynthesis; L-tryptophan biosynthesis; L-tryptophan from chorismate: step 5/5. Its function is as follows. The alpha subunit is responsible for the aldol cleavage of indoleglycerol phosphate to indole and glyceraldehyde 3-phosphate. The chain is Tryptophan synthase alpha chain from Brucella melitensis biotype 1 (strain ATCC 23456 / CCUG 17765 / NCTC 10094 / 16M).